The chain runs to 570 residues: Sulfite reductase [NADPH] hemoprotein beta-component (570 aa).

Cysteine 434, cysteine 440, cysteine 479, and cysteine 483 together coordinate [4Fe-4S] cluster. Cysteine 483 provides a ligand contact to siroheme.

The protein belongs to the nitrite and sulfite reductase 4Fe-4S domain family. In terms of assembly, alpha(8)-beta(8). The alpha component is a flavoprotein, the beta component is a hemoprotein. The cofactor is siroheme. Requires [4Fe-4S] cluster as cofactor.

The catalysed reaction is hydrogen sulfide + 3 NADP(+) + 3 H2O = sulfite + 3 NADPH + 4 H(+). The protein operates within sulfur metabolism; hydrogen sulfide biosynthesis; hydrogen sulfide from sulfite (NADPH route): step 1/1. In terms of biological role, component of the sulfite reductase complex that catalyzes the 6-electron reduction of sulfite to sulfide. This is one of several activities required for the biosynthesis of L-cysteine from sulfate. The polypeptide is Sulfite reductase [NADPH] hemoprotein beta-component (Salmonella gallinarum (strain 287/91 / NCTC 13346)).